Consider the following 144-residue polypeptide: Phosphomevalonate dehydratase small subunit (144 aa).

The active-site Proton acceptor is serine 65.

The protein belongs to the AcnX type II small subunit family. In terms of assembly, heterodimer composed of a large subunit (PMDh-L) and a small subunit (PMDh-S).

It carries out the reaction (R)-5-phosphomevalonate = (2E)-3-methyl-5-phosphooxypent-2-enoate + H2O. It functions in the pathway isoprenoid biosynthesis; isopentenyl diphosphate biosynthesis via mevalonate pathway. Functionally, component of a hydro-lyase that catalyzes the dehydration of mevalonate 5-phosphate (MVA5P) to form trans-anhydromevalonate 5-phosphate (tAHMP). Involved in the archaeal mevalonate (MVA) pathway, which provides fundamental precursors for isoprenoid biosynthesis, such as isopentenyl diphosphate (IPP) and dimethylallyl diphosphate (DMAPP). The sequence is that of Phosphomevalonate dehydratase small subunit from Methanosarcina mazei (strain ATCC BAA-159 / DSM 3647 / Goe1 / Go1 / JCM 11833 / OCM 88) (Methanosarcina frisia).